The chain runs to 773 residues: Glucan endo-1,3-beta-D-glucosidase (773 aa).

Positions 1–194 (MPPGAKVPQA…KNYFSIAVLP (194 aa)) are beta-sandwich subdomain. The region spanning 1-647 (MPPGAKVPQA…HWICNLDSLG (647 aa)) is the GH81 domain. Mg(2+) is bound by residues Ile-31, Asn-34, Gln-35, Tyr-36, and Ala-89. The tract at residues 195-288 (DNTVSTLTYY…QGTSFKTVYR (94 aa)) is alpha/beta subdomain. A (alpha/beta)6 barrel subdomain region spans residues 298 to 647 (DKGTYDREAL…HWICNLDSLG (350 aa)). Tyr-327 and Lys-331 together coordinate (1,3-beta-D-glucosyl)n. Residues Asp-365, Thr-368, Glu-373, and Lys-376 each contribute to the Ca(2+) site. The (1,3-beta-D-glucosyl)n site is built by Asp-402 and His-406. Asp-402 is an active-site residue. Leu-454, Arg-455, and Phe-457 together coordinate Ca(2+). Asn-477, Glu-479, and Glu-483 together coordinate (1,3-beta-D-glucosyl)n. Active-site residues include Glu-479 and Glu-483. 4 residues coordinate Mg(2+): Lys-527, Lys-618, Asn-619, and Trp-621. Ca(2+) is bound by residues Asp-712, Asn-714, Asp-716, Gly-717, Lys-718, Asp-723, Asp-748, Ile-749, Asn-750, Asp-752, Lys-754, and Asp-759.

It belongs to the glycosyl hydrolase 81 family. Ca(2+) serves as cofactor. It depends on Mg(2+) as a cofactor.

The protein localises to the secreted. The catalysed reaction is Hydrolysis of (1-&gt;3)-beta-D-glucosidic linkages in (1-&gt;3)-beta-D-glucans.. Inhibited by manganese, zinc, and copper ions. In terms of biological role, cleaves internal linkages in 1,3-beta-glucan. May contribute to plant biomass degradation. This Acetivibrio thermocellus (strain ATCC 27405 / DSM 1237 / JCM 9322 / NBRC 103400 / NCIMB 10682 / NRRL B-4536 / VPI 7372) (Clostridium thermocellum) protein is Glucan endo-1,3-beta-D-glucosidase.